The primary structure comprises 367 residues: Flagellar P-ring protein (367 aa).

Positions 1–21 (MYVFKALAGIVLALVATLAHA) are cleaved as a signal peptide.

The protein belongs to the FlgI family. The basal body constitutes a major portion of the flagellar organelle and consists of four rings (L,P,S, and M) mounted on a central rod.

The protein localises to the periplasm. Its subcellular location is the bacterial flagellum basal body. Its function is as follows. Assembles around the rod to form the L-ring and probably protects the motor/basal body from shearing forces during rotation. The sequence is that of Flagellar P-ring protein from Salmonella arizonae (strain ATCC BAA-731 / CDC346-86 / RSK2980).